Consider the following 120-residue polypeptide: Large ribosomal subunit protein uL18 (120 aa).

The protein belongs to the universal ribosomal protein uL18 family. Part of the 50S ribosomal subunit; part of the 5S rRNA/L5/L18/L25 subcomplex. Contacts the 5S and 23S rRNAs.

Functionally, this is one of the proteins that bind and probably mediate the attachment of the 5S RNA into the large ribosomal subunit, where it forms part of the central protuberance. This chain is Large ribosomal subunit protein uL18, found in Methylobacterium radiotolerans (strain ATCC 27329 / DSM 1819 / JCM 2831 / NBRC 15690 / NCIMB 10815 / 0-1).